A 213-amino-acid chain; its full sequence is MAALSAPGLCGFRILGLRSSVGTAVQARGVHQSVATDGPSSTQPALPKARAVAPKPSSRGEYVVAKLDDLVNWARRSSLWPMTFGLACCAVEMMHMAAPRYDMDRFGVVFRASPRQSDVMIVAGTLTNKMAPALRKVYDQMPEPRYVVSMGSCANGGGYYHYSYSVVRGCDRIVPVDIYIPGCPPTAEALLYGILQLQRKIKRERRLQIWYRR.

The N-terminal 38 residues, 1–38 (MAALSAPGLCGFRILGLRSSVGTAVQARGVHQSVATDG), are a transit peptide targeting the mitochondrion. Residues 32 to 53 (QSVATDGPSSTQPALPKARAVA) form a disordered region. A compositionally biased stretch (polar residues) spans 33 to 44 (SVATDGPSSTQP). Positions 88 and 89 each coordinate [4Fe-4S] cluster. Arg-111 bears the Hydroxyarginine mark. Positions 153 and 183 each coordinate [4Fe-4S] cluster.

The protein belongs to the complex I 20 kDa subunit family. Core subunit of respiratory chain NADH dehydrogenase (Complex I) which is composed of 45 different subunits. This is a component of the iron-sulfur (IP) fragment of the enzyme. [4Fe-4S] cluster serves as cofactor. Post-translationally, hydroxylated ar Arg-111 by NDUFAF5 early in the pathway of assembly of complex I, before the formation of the juncture between peripheral and membrane arms.

It is found in the mitochondrion inner membrane. It carries out the reaction a ubiquinone + NADH + 5 H(+)(in) = a ubiquinol + NAD(+) + 4 H(+)(out). Core subunit of the mitochondrial membrane respiratory chain NADH dehydrogenase (Complex I) which catalyzes electron transfer from NADH through the respiratory chain, using ubiquinone as an electron acceptor. Essential for the catalytic activity of complex I. This is NADH dehydrogenase [ubiquinone] iron-sulfur protein 7, mitochondrial (NDUFS7) from Gorilla gorilla gorilla (Western lowland gorilla).